The primary structure comprises 211 residues: Interleukin-6 (211 aa).

Positions 1-24 are cleaved as a signal peptide; that stretch reads MKFLSARDFQPVAFLGLMLLTATA. Residues Cys-70 and Cys-76 are joined by a disulfide bond. Position 79 is a phosphoserine (Ser-79). A disulfide bridge links Cys-99 with Cys-109.

Belongs to the IL-6 superfamily. Component of a hexamer of two molecules each of IL6, IL6R and IL6ST; first binds to IL6R to associate with the signaling subunit IL6ST. Interacts with IL6R (via the N-terminal ectodomain); this interaction may be affected by IL6R-binding with SORL1, hence decreasing IL6 cis signaling. Interacts with SORL1 (via the N-terminal ectodomain); this interaction leads to IL6 internalization and lysosomal degradation. May form a trimeric complex with the soluble SORL1 ectodomain and soluble IL6R receptor; this interaction might stabilize circulating IL6, hence promoting IL6 trans signaling.

The protein resides in the secreted. Its function is as follows. Cytokine with a wide variety of biological functions in immunity, tissue regeneration, and metabolism. Binds to IL6R, then the complex associates to the signaling subunit IL6ST/gp130 to trigger the intracellular IL6-signaling pathway. The interaction with the membrane-bound IL6R and IL6ST stimulates 'classic signaling', whereas the binding of IL6 and soluble IL6R to IL6ST stimulates 'trans-signaling'. Alternatively, 'cluster signaling' occurs when membrane-bound IL6:IL6R complexes on transmitter cells activate IL6ST receptors on neighboring receiver cells. In terms of biological role, IL6 is a potent inducer of the acute phase response. Rapid production of IL6 contributes to host defense during infection and tissue injury, but excessive IL6 synthesis is involved in disease pathology. In the innate immune response, is synthesized by myeloid cells, such as macrophages and dendritic cells, upon recognition of pathogens through toll-like receptors (TLRs) at the site of infection or tissue injury. In the adaptive immune response, is required for the differentiation of B-cells into immunoglolin-secreting cells. Plays a major role in the differentiation of CD4(+) T cell subsets. Essential factor for the development of T follicular helper (Tfh) cells that are required for the induction of germinal-center formation. Together with IL21, controls the early generation of Tfh cells and are critical for an effective antibody response to acute viral infection. Required to drive naive CD4(+) T cells to the Th17 lineage, through 'cluster signaling' by dendritic cells. Also required for proliferation of myeloma cells and the survival of plasmablast cells. Functionally, acts as an essential factor in bone homeostasis and on vessels directly or indirectly by induction of VEGF, resulting in increased angiogenesis activity and vascular permeability. Induces, through 'trans-signaling' and synergistically with IL1B and TNF, the production of VEGF. Involved in metabolic controls, is discharged into the bloodstream after muscle contraction increasing lipolysis and improving insulin resistance. 'Trans-signaling' in central nervous system regulates energy and glucose homeostasis. Mediates, through GLP-1, crosstalk between insulin-sensitive tissues, intestinal L cells and pancreatic islets to adapt to changes in insulin demand. Also acts as a myokine. Plays a protective role during liver injury, being required for maintenance of tissue regeneration. Also has a pivotal role in iron metabolism by regulating HAMP/hepcidin expression upon inflammation or bacterial infection. Through activation of IL6ST-YAP-NOTCH pathway, induces inflammation-induced epithelial regeneration. This is Interleukin-6 from Rattus norvegicus (Rat).